The sequence spans 426 residues: Histidine--tRNA ligase (426 aa).

The protein belongs to the class-II aminoacyl-tRNA synthetase family.

It localises to the cytoplasm. The enzyme catalyses tRNA(His) + L-histidine + ATP = L-histidyl-tRNA(His) + AMP + diphosphate + H(+). This is Histidine--tRNA ligase from Saccharolobus islandicus (strain Y.G.57.14 / Yellowstone #1) (Sulfolobus islandicus).